Reading from the N-terminus, the 228-residue chain is HTH-type transcriptional regulator TfdT (228 aa).

The 58-residue stretch at 1–58 folds into the HTH lysR-type domain; that stretch reads MEIRQLKYFVAVAEAGGFGTAAQRMHISQPPLTRQIQALERDIGAKLFERTARGVELT. A DNA-binding region (H-T-H motif) is located at residues 18-37; the sequence is FGTAAQRMHISQPPLTRQIQ.

The protein belongs to the LysR transcriptional regulatory family.

It is found in the cytoplasm. Its function is as follows. Does not seem to be involved in the regulation of 3-chlorocatechol degradation. Does not activate the expression of its presumed target operon, tfdCDEF. The sequence is that of HTH-type transcriptional regulator TfdT (tfdT) from Cupriavidus pinatubonensis (strain JMP 134 / LMG 1197) (Cupriavidus necator (strain JMP 134)).